We begin with the raw amino-acid sequence, 1043 residues long: Unconventional myosin-Ia (1043 aa).

Residues 8–694 (VGVEDLVLLE…TLFYLEEQRR (687 aa)) form the Myosin motor domain. 101-108 (GESGSGKT) is an ATP binding site. Positions 571-593 (VAILMKNLYSKSPNYIRCIKPNE) are actin-binding. IQ domains follow at residues 697–719 (LQQL…HYQL), 720–742 (MRKS…CYGK), and 743–772 (IKAS…SEAA). Residues 858 to 1042 (KASYPQSVPI…KGSHCLEVTV (185 aa)) enclose the TH1 domain.

It belongs to the TRAFAC class myosin-kinesin ATPase superfamily. Myosin family. In terms of processing, phosphorylated by ALPK1.

In terms of biological role, involved in directing the movement of organelles along actin filaments. This is Unconventional myosin-Ia (MYO1A) from Homo sapiens (Human).